The following is a 210-amino-acid chain: ATP phosphoribosyltransferase (210 aa).

The protein belongs to the ATP phosphoribosyltransferase family. Short subfamily. In terms of assembly, heteromultimer composed of HisG and HisZ subunits.

The protein localises to the cytoplasm. The catalysed reaction is 1-(5-phospho-beta-D-ribosyl)-ATP + diphosphate = 5-phospho-alpha-D-ribose 1-diphosphate + ATP. It functions in the pathway amino-acid biosynthesis; L-histidine biosynthesis; L-histidine from 5-phospho-alpha-D-ribose 1-diphosphate: step 1/9. Its function is as follows. Catalyzes the condensation of ATP and 5-phosphoribose 1-diphosphate to form N'-(5'-phosphoribosyl)-ATP (PR-ATP). Has a crucial role in the pathway because the rate of histidine biosynthesis seems to be controlled primarily by regulation of HisG enzymatic activity. This is ATP phosphoribosyltransferase (hisG) from Synechocystis sp. (strain ATCC 27184 / PCC 6803 / Kazusa).